A 659-amino-acid polypeptide reads, in one-letter code: Alpha-amylase (659 aa).

The first 27 residues, 1–27 (MFAKRFKTSLLPLFAGFLLLFHLVLAG), serve as a signal peptide directing secretion. The propeptide occupies 28–41 (PAAASAETANKSNE). Residues Asn-142, Thr-178, Asp-187, Gly-210, and Asp-212 each coordinate Ca(2+). The active-site Nucleophile is the Asp-217. Residue His-221 participates in Ca(2+) binding. Glu-249 serves as the catalytic Proton donor.

It belongs to the glycosyl hydrolase 13 family. Monomer. Ca(2+) serves as cofactor.

Its subcellular location is the secreted. The enzyme catalyses Endohydrolysis of (1-&gt;4)-alpha-D-glucosidic linkages in polysaccharides containing three or more (1-&gt;4)-alpha-linked D-glucose units.. This Bacillus subtilis (strain 168) protein is Alpha-amylase (amyE).